Here is a 227-residue protein sequence, read N- to C-terminus: Cytochrome c oxidase subunit 2 (227 aa).

The Mitochondrial intermembrane segment spans residues 1–14; sequence MAHAAQVGLQDATS. A helical membrane pass occupies residues 15–45; it reads PIMEELITFHDHALMIIFLICFLVLYALFLT. Over 46–59 the chain is Mitochondrial matrix; that stretch reads LTTKLTSTNISDAQ. The helical transmembrane segment at 60–87 threads the bilayer; sequence EMETIWTILPAIILVLIALPSLRILYMT. Residues 88–227 lie on the Mitochondrial intermembrane side of the membrane; it reads DEINDPSFTI…IFEMGPVFAL (140 aa). Cu cation is bound by residues His-161, Cys-196, Glu-198, Cys-200, His-204, and Met-207. Glu-198 serves as a coordination point for Mg(2+).

This sequence belongs to the cytochrome c oxidase subunit 2 family. As to quaternary structure, component of the cytochrome c oxidase (complex IV, CIV), a multisubunit enzyme composed of 14 subunits. The complex is composed of a catalytic core of 3 subunits MT-CO1, MT-CO2 and MT-CO3, encoded in the mitochondrial DNA, and 11 supernumerary subunits COX4I, COX5A, COX5B, COX6A, COX6B, COX6C, COX7A, COX7B, COX7C, COX8 and NDUFA4, which are encoded in the nuclear genome. The complex exists as a monomer or a dimer and forms supercomplexes (SCs) in the inner mitochondrial membrane with NADH-ubiquinone oxidoreductase (complex I, CI) and ubiquinol-cytochrome c oxidoreductase (cytochrome b-c1 complex, complex III, CIII), resulting in different assemblies (supercomplex SCI(1)III(2)IV(1) and megacomplex MCI(2)III(2)IV(2)). Found in a complex with TMEM177, COA6, COX18, COX20, SCO1 and SCO2. Interacts with TMEM177 in a COX20-dependent manner. Interacts with COX20. Interacts with COX16. It depends on Cu cation as a cofactor.

Its subcellular location is the mitochondrion inner membrane. It catalyses the reaction 4 Fe(II)-[cytochrome c] + O2 + 8 H(+)(in) = 4 Fe(III)-[cytochrome c] + 2 H2O + 4 H(+)(out). Its function is as follows. Component of the cytochrome c oxidase, the last enzyme in the mitochondrial electron transport chain which drives oxidative phosphorylation. The respiratory chain contains 3 multisubunit complexes succinate dehydrogenase (complex II, CII), ubiquinol-cytochrome c oxidoreductase (cytochrome b-c1 complex, complex III, CIII) and cytochrome c oxidase (complex IV, CIV), that cooperate to transfer electrons derived from NADH and succinate to molecular oxygen, creating an electrochemical gradient over the inner membrane that drives transmembrane transport and the ATP synthase. Cytochrome c oxidase is the component of the respiratory chain that catalyzes the reduction of oxygen to water. Electrons originating from reduced cytochrome c in the intermembrane space (IMS) are transferred via the dinuclear copper A center (CU(A)) of subunit 2 and heme A of subunit 1 to the active site in subunit 1, a binuclear center (BNC) formed by heme A3 and copper B (CU(B)). The BNC reduces molecular oxygen to 2 water molecules using 4 electrons from cytochrome c in the IMS and 4 protons from the mitochondrial matrix. This chain is Cytochrome c oxidase subunit 2 (MT-CO2), found in Gorilla gorilla gorilla (Western lowland gorilla).